A 1543-amino-acid chain; its full sequence is ABC multidrug transporter AFR1 (1543 aa).

The tract at residues 1–85 (MSAAGVPAEL…DGKQKRLPAD (85 aa)) is disordered. Over residues 18 to 41 (TATTQNPSGLANSQVTSGPVSSAT) the composition is skewed to polar residues. The segment covering 62–83 (AVEAEKAEAIDAAGDGKQKRLP) has biased composition (basic and acidic residues). N-linked (GlcNAc...) asparagine glycosylation is present at asparagine 117. The interval 119–157 (SQRSQHELHRPTTRHSVRSSFSRKDRVVSRLTQDDAEKA) is disordered. Positions 140–157 (SRKDRVVSRLTQDDAEKA) are enriched in basic and acidic residues. N-linked (GlcNAc...) asparagine glycans are attached at residues asparagine 208 and asparagine 398. The region spanning 222–474 (IKVLGIFGFN…MIGLGYRDLP (253 aa)) is the ABC transporter 1 domain. Helical transmembrane passes span 585-605 (FGIS…GSVY), 619-639 (GGLL…ELPS), 670-690 (VPYN…MGGL), 695-715 (GAFF…SAFF), and 727-747 (VAAR…GYMI). Residue asparagine 823 is glycosylated (N-linked (GlcNAc...) asparagine). A helical membrane pass occupies residues 845–865 (FGILLGFFTFFMFLQMLFIEV). The 243-residue stretch at 918-1160 (FTWEGLSYTV…VLIDYLERNG (243 aa)) folds into the ABC transporter 2 domain. 954–961 (GASGAGKT) contributes to the ATP binding site. N-linked (GlcNAc...) asparagine glycosylation occurs at asparagine 1223. 6 helical membrane-spanning segments follow: residues 1254–1274 (WTRL…FLQL), 1285–1305 (VFAI…IEPQ), 1336–1356 (MPYS…GVGF), 1366–1386 (FFLM…AVAA), 1391–1411 (ILIA…FCGV), and 1517–1537 (FGIF…AARF).

This sequence belongs to the ABC transporter superfamily. ABCG family. PDR (TC 3.A.1.205) subfamily.

Its subcellular location is the cell membrane. The catalysed reaction is itraconazole(in) + ATP + H2O = itraconazole(out) + ADP + phosphate + H(+). It catalyses the reaction voriconazole(in) + ATP + H2O = voriconazole(out) + ADP + phosphate + H(+). It carries out the reaction fluconazole(in) + ATP + H2O = fluconazole(out) + ADP + phosphate + H(+). Functionally, major pleiotropic ABC efflux transporter that confers resistance to structurally and functionally unrelated compounds including azoles such as fluconazole (FLC), itraconazole (ITC), posaconazole (POS), and voriconazole (VRC). Is also able to efflux the eukaryote protein synthesis inhibitor cycloheximide (CHX). This chain is ABC multidrug transporter AFR1, found in Cryptococcus neoformans var. grubii serotype A (strain H99 / ATCC 208821 / CBS 10515 / FGSC 9487) (Filobasidiella neoformans var. grubii).